Here is a 210-residue protein sequence, read N- to C-terminus: MSGVMGIDEAGRGPVFGPMVVAGVLAPKRELGLGARDSKELTRSARRRLIRALMSDERLRVDLRIVWPWEIDEEGVAKAEFEAIRELVRRAMPDEVILDKPGNYSPERLRRELDLPEGINLIAEERADAKYEVVSAASIVAKTYRDWIVRLLELEYGEVGSGYPSDPRTVDRLRRELRRGGELLKYFRRSWETYKRVESEVKQRKLEDFF.

The RNase H type-2 domain occupies 2 to 203; that stretch reads SGVMGIDEAG…YKRVESEVKQ (202 aa). Aspartate 8, glutamate 9, and aspartate 99 together coordinate a divalent metal cation.

The protein belongs to the RNase HII family. The cofactor is Mn(2+). It depends on Mg(2+) as a cofactor.

The protein localises to the cytoplasm. The enzyme catalyses Endonucleolytic cleavage to 5'-phosphomonoester.. Its function is as follows. Endonuclease that specifically degrades the RNA of RNA-DNA hybrids. The polypeptide is Ribonuclease HII (Methanopyrus kandleri (strain AV19 / DSM 6324 / JCM 9639 / NBRC 100938)).